The chain runs to 435 residues: GTPase Obg (435 aa).

The Obg domain occupies 6 to 164; it reads ADFVDRVKIF…RWLELELKIL (159 aa). In terms of domain architecture, OBG-type G spans 165–335; it reads ADVGLVGYPN…LVSKLASIVR (171 aa). GTP-binding positions include 171 to 178, 196 to 200, 217 to 220, 287 to 290, and 316 to 318; these read GYPNVGKS, FTTLI, DIPG, NKID, and SAV. Mg(2+)-binding residues include Ser178 and Thr198. The OCT domain occupies 357–435; sequence RRLPEKFHLE…IGDFEFEYRE (79 aa).

Belongs to the TRAFAC class OBG-HflX-like GTPase superfamily. OBG GTPase family. As to quaternary structure, monomer. It depends on Mg(2+) as a cofactor.

It is found in the cytoplasm. Its function is as follows. An essential GTPase which binds GTP, GDP and possibly (p)ppGpp with moderate affinity, with high nucleotide exchange rates and a fairly low GTP hydrolysis rate. Plays a role in control of the cell cycle, stress response, ribosome biogenesis and in those bacteria that undergo differentiation, in morphogenesis control. This is GTPase Obg from Thermotoga petrophila (strain ATCC BAA-488 / DSM 13995 / JCM 10881 / RKU-1).